The primary structure comprises 372 residues: Chaperone protein DnaJ (372 aa).

Positions 5-70 (SYYDILGVSK…KKRQAYDQFG (66 aa)) constitute a J domain. The CR-type zinc-finger motif lies at 140-218 (GREYKIEIPR…CGGQGLQEKR (79 aa)). Residues C153, C156, C170, C173, C192, C195, C206, and C209 each contribute to the Zn(2+) site. CXXCXGXG motif repeat units follow at residues 153–160 (CVDCNGSG), 170–177 (CPDCGGSG), 192–199 (CPTCRGKG), and 206–213 (CRSCGGQG).

This sequence belongs to the DnaJ family. As to quaternary structure, homodimer. Zn(2+) is required as a cofactor.

Its subcellular location is the cytoplasm. Participates actively in the response to hyperosmotic and heat shock by preventing the aggregation of stress-denatured proteins and by disaggregating proteins, also in an autonomous, DnaK-independent fashion. Unfolded proteins bind initially to DnaJ; upon interaction with the DnaJ-bound protein, DnaK hydrolyzes its bound ATP, resulting in the formation of a stable complex. GrpE releases ADP from DnaK; ATP binding to DnaK triggers the release of the substrate protein, thus completing the reaction cycle. Several rounds of ATP-dependent interactions between DnaJ, DnaK and GrpE are required for fully efficient folding. Also involved, together with DnaK and GrpE, in the DNA replication of plasmids through activation of initiation proteins. In Leptospira interrogans serogroup Icterohaemorrhagiae serovar copenhageni (strain Fiocruz L1-130), this protein is Chaperone protein DnaJ.